The following is a 230-amino-acid chain: Endonuclease NucS (230 aa).

This sequence belongs to the NucS endonuclease family.

Its subcellular location is the cytoplasm. Cleaves both 3' and 5' ssDNA extremities of branched DNA structures. The chain is Endonuclease NucS from Corynebacterium glutamicum (strain ATCC 13032 / DSM 20300 / JCM 1318 / BCRC 11384 / CCUG 27702 / LMG 3730 / NBRC 12168 / NCIMB 10025 / NRRL B-2784 / 534).